Reading from the N-terminus, the 65-residue chain is Large ribosomal subunit protein bL35 (65 aa).

Residues 1–15 (MPKMKTKSSAKKRFS) are compositionally biased toward basic residues. The tract at residues 1–21 (MPKMKTKSSAKKRFSIRAGGS) is disordered.

It belongs to the bacterial ribosomal protein bL35 family.

The sequence is that of Large ribosomal subunit protein bL35 from Dechloromonas aromatica (strain RCB).